A 124-amino-acid chain; its full sequence is MPTISQLIRKGREEAVKKSAAPALKECPQKRGVCTRVYTTTPKKPNSALRKVARVRLTNGIEVTSYIPGIGHNLQEHSVVLVRGGRVKDLPGVRYHIVRGALDSAGVQNRNRGRSKYGTKRPKK.

Asp-89 carries the post-translational modification 3-methylthioaspartic acid. The tract at residues 104–124 is disordered; sequence SAGVQNRNRGRSKYGTKRPKK. Residues 111–124 are compositionally biased toward basic residues; it reads NRGRSKYGTKRPKK.

Belongs to the universal ribosomal protein uS12 family. Part of the 30S ribosomal subunit. Contacts proteins S8 and S17. May interact with IF1 in the 30S initiation complex.

In terms of biological role, with S4 and S5 plays an important role in translational accuracy. Its function is as follows. Interacts with and stabilizes bases of the 16S rRNA that are involved in tRNA selection in the A site and with the mRNA backbone. Located at the interface of the 30S and 50S subunits, it traverses the body of the 30S subunit contacting proteins on the other side and probably holding the rRNA structure together. The combined cluster of proteins S8, S12 and S17 appears to hold together the shoulder and platform of the 30S subunit. The chain is Small ribosomal subunit protein uS12 from Pelotomaculum thermopropionicum (strain DSM 13744 / JCM 10971 / SI).